Consider the following 88-residue polypeptide: Large ribosomal subunit protein bL27 (88 aa).

A disordered region spans residues 1-21 (MAHKKGTGSTRNGRDSNAKRL).

Belongs to the bacterial ribosomal protein bL27 family.

The sequence is that of Large ribosomal subunit protein bL27 from Parasynechococcus marenigrum (strain WH8102).